A 662-amino-acid chain; its full sequence is A-kinase anchor protein 10, mitochondrial (662 aa).

The transit peptide at 1–28 (MRGAGPSPRQSPRTLRPDPGPAMSFFRR) directs the protein to the mitochondrion. Positions 1–55 (MRGAGPSPRQSPRTLRPDPGPAMSFFRRKVKGKEQEKTSDVKSIKASISVHSPQK) are disordered. The span at 32-43 (GKEQEKTSDVKS) shows a compositional bias: basic and acidic residues. Ser52 and Ser189 each carry phosphoserine. 2 RGS domains span residues 125–369 (TLEQ…CKYQ) and 379–505 (YLAD…YKYL). Polar residues predominate over residues 261 to 280 (SMETQESSSTLTVASRNSPA). Positions 261–282 (SMETQESSSTLTVASRNSPASP) are disordered. Ser281 is subject to Phosphoserine. Positions 524–548 (LTAPGSVGPPDESHPGSSDSSASQS) are disordered. The interval 634-647 (LAWKIAKMIVSDIM) is PKA-RII subunit binding.

It is found in the mitochondrion. Its subcellular location is the membrane. It localises to the cytoplasm. Its function is as follows. Differentially targeted protein that binds to type I and II regulatory subunits of protein kinase A and anchors them to the mitochondria or the plasma membrane. Although the physiological relevance between PKA and AKAPS with mitochondria is not fully understood, one idea is that BAD, a proapoptotic member, is phosphorylated and inactivated by mitochondria-anchored PKA. It cannot be excluded too that it may facilitate PKA as well as G protein signal transduction, by acting as an adapter for assembling multiprotein complexes. With its RGS domain, it could lead to the interaction to G-alpha proteins, providing a link between the signaling machinery and the downstream kinase. The polypeptide is A-kinase anchor protein 10, mitochondrial (AKAP10) (Homo sapiens (Human)).